The sequence spans 663 residues: Syntabulin (663 aa).

Disordered regions lie at residues 1–202 and 216–267; these read MGPL…PREK and VNIH…PEQY. Residues 2-417 form a sufficient for interaction with KIF5B region; that stretch reads GPLRESKKEH…DTMADGLSLE (416 aa). At S50 the chain carries Phosphoserine. Over residues 57-73 the composition is skewed to low complexity; it reads FNPSSSGRSARTVSSNS. Over residues 81–97 the composition is skewed to polar residues; that stretch reads CPSSQSVSPVKTPSDAG. S107 carries the phosphoserine modification. Low complexity-rich tracts occupy residues 145 to 158, 188 to 198, and 221 to 241; these read EADFSSSSSTGSIS, SSHKPGSSPSS, and SYAPSSPSSSNSGSYKGSDCS. The stretch at 271–353 forms a coiled coil; it reads LQQKEVTVRH…MRSSLADKDK (83 aa). The segment at 310 to 417 is sufficient for interaction with STX1A; that stretch reads REDWIEEECH…DTMADGLSLE (108 aa). Phosphoserine occurs at positions 396 and 555. A helical transmembrane segment spans residues 606 to 626; that stretch reads SFLVDLLAVAAPVVPTVLWAF.

As to quaternary structure, interacts with STX1A and KIF5B. Isoform 3, isoform 4 and isoform 5 are expressed in HeLa cell line (at protein level). Isoform 3 is expressed in fetal and adult brain. Isoform 4 is expressed in numerous fetal tissues (brain, kidney, liver, lung, and thymus) and in adult brain, kidney, liver, lung, pancreas, colon, prostate, small intestine, testis and thymus. Isoform 5 is expressed in fetal brain, brain and small intestine.

Its subcellular location is the cytoplasm. It is found in the cytoskeleton. The protein localises to the cytoplasmic vesicle. The protein resides in the golgi apparatus membrane. Its function is as follows. Part of a kinesin motor-adapter complex that is critical for the anterograde axonal transport of active zone components and contributes to activity-dependent presynaptic assembly during neuronal development. The sequence is that of Syntabulin (SYBU) from Homo sapiens (Human).